The following is a 478-amino-acid chain: Serralysin C (478 aa).

Residues 1–17 constitute a propeptide that is removed on maturation; sequence MEKNLSSRDDDALHSLS. Residue histidine 187 coordinates Zn(2+). Residue glutamate 188 is part of the active site. Zn(2+)-binding residues include histidine 191 and tyrosine 227. Ca(2+)-binding residues include arginine 264, glycine 266, aspartate 296, glycine 298, glycine 299, aspartate 301, threonine 338, glutamate 340, glycine 345, glycine 347, aspartate 349, asparagine 354, alanine 356, asparagine 358, glycine 362, glycine 363, alanine 364, glycine 365, aspartate 367, glycine 371, glycine 372, glycine 374, aspartate 376, glycine 380, glycine 381, glycine 383, aspartate 385, aspartate 394, aspartate 401, and aspartate 411. Hemolysin-type calcium-binding repeat units follow at residues 343 to 360 and 361 to 378; these read IGGS…DNTL and RGGA…ADRL.

The protein belongs to the peptidase M10B family. The cofactor is Ca(2+). Requires Zn(2+) as cofactor.

The protein resides in the secreted. The catalysed reaction is Preferential cleavage of bonds with hydrophobic residues in P1'.. The chain is Serralysin C (prtC) from Dickeya chrysanthemi (Pectobacterium chrysanthemi).